A 361-amino-acid polypeptide reads, in one-letter code: Serpentine receptor class epsilon-32 (361 aa).

Helical transmembrane passes span 34–54 (IIEL…LYVM), 66–86 (ILYI…LITI), 124–144 (LLIF…YGIL), 168–188 (IPIA…LSVL), 195–215 (FLSH…YLFI), 256–276 (LVFV…ALAF), and 286–306 (FVEN…MLTI).

Belongs to the nematode receptor-like protein sre family.

It is found in the membrane. In Caenorhabditis elegans, this protein is Serpentine receptor class epsilon-32 (sre-32).